A 126-amino-acid polypeptide reads, in one-letter code: Large ribosomal subunit protein bL17 (126 aa).

Belongs to the bacterial ribosomal protein bL17 family. In terms of assembly, part of the 50S ribosomal subunit. Contacts protein L32.

This Coxiella burnetii (strain CbuG_Q212) (Coxiella burnetii (strain Q212)) protein is Large ribosomal subunit protein bL17.